The following is a 557-amino-acid chain: Copine-7 (557 aa).

C2 domains lie at 1–128 and 135–263; these read MSGD…TRPL and NAGK…AQWD. Ca(2+) contacts are provided by aspartate 168, aspartate 174, aspartate 230, aspartate 232, and aspartate 238. Positions 306–505 constitute a VWFA domain; that stretch reads HCTVAIDFTA…PALRDIVQFV (200 aa).

This sequence belongs to the copine family. The cofactor is Ca(2+).

The protein localises to the cytoplasm. It localises to the nucleus. The protein resides in the cell membrane. In terms of biological role, calcium-dependent phospholipid-binding protein that may play a role in calcium-mediated intracellular processes. The sequence is that of Copine-7 from Mus musculus (Mouse).